A 397-amino-acid chain; its full sequence is S-adenosylmethionine synthase (397 aa).

Histidine 16 provides a ligand contact to ATP. Residue aspartate 18 participates in Mg(2+) binding. Glutamate 44 provides a ligand contact to K(+). L-methionine contacts are provided by glutamate 57 and glutamine 100. Residues 100–110 form a flexible loop region; it reads QSPDIAQGVDN. ATP is bound by residues 175–177, 242–243, aspartate 251, 257–258, alanine 274, and lysine 278; these read DGK, RF, and RK. Aspartate 251 is a binding site for L-methionine. Residue lysine 282 participates in L-methionine binding.

Belongs to the AdoMet synthase family. Homotetramer; dimer of dimers. Mg(2+) is required as a cofactor. K(+) serves as cofactor.

It localises to the cytoplasm. The catalysed reaction is L-methionine + ATP + H2O = S-adenosyl-L-methionine + phosphate + diphosphate. Its pathway is amino-acid biosynthesis; S-adenosyl-L-methionine biosynthesis; S-adenosyl-L-methionine from L-methionine: step 1/1. In terms of biological role, catalyzes the formation of S-adenosylmethionine (AdoMet) from methionine and ATP. The overall synthetic reaction is composed of two sequential steps, AdoMet formation and the subsequent tripolyphosphate hydrolysis which occurs prior to release of AdoMet from the enzyme. The chain is S-adenosylmethionine synthase from Leifsonia xyli subsp. xyli (strain CTCB07).